The primary structure comprises 362 residues: MEQQPKMVTGWAARDANGLLSPFSYPLRAKGDEDVVVKILFCGICHSDLSTIKNEWGNAKYPVVPGHEIVGVVAEVGSSVARFAAGDTVGVGYIASTCRACANCRDGFENYCAGLVPSFNAALPDGATVHGGFSELAVVNQRYVVRIPGGGGGASPAPLDRLAPLLCAGVTVYCPMRRLGLDRPGVHLGVAGLGGLGHLAVKFGKAFGVKVTVISTSPWKEAEAVERLGADAFLLSTNAEQMKAAAGTMDGIIDTVSAVHDLTPLITLLRTHGQLVPVGSPGKPVQLALYPLQSDGKSVAGSMIGGMRDTQEMVDFAVEHGVAAEVEVIGMEDVNGAMERLQKGDVRYRFVIDVANTMARAR.

Cys45 provides a ligand contact to Zn(2+). Ser47 is an NADP(+) binding site. Residues His67, Glu68, Cys98, Cys101, Cys104, Cys112, and Cys167 each coordinate Zn(2+). Residues Thr171, 192 to 197 (GLGGLG), 215 to 220 (STSPWK), Thr255, Gly279, and 302 to 304 (SMI) each bind NADP(+).

This sequence belongs to the zinc-containing alcohol dehydrogenase family. As to quaternary structure, homodimer. The cofactor is Zn(2+).

It catalyses the reaction (E)-cinnamyl alcohol + NADP(+) = (E)-cinnamaldehyde + NADPH + H(+). It carries out the reaction (E)-coniferol + NADP(+) = (E)-coniferaldehyde + NADPH + H(+). The enzyme catalyses (E)-sinapyl alcohol + NADP(+) = (E)-sinapaldehyde + NADPH + H(+). The catalysed reaction is (E)-4-coumaroyl alcohol + NADP(+) = (E)-4-coumaraldehyde + NADPH + H(+). It catalyses the reaction (E)-caffeyl alcohol + NADP(+) = (E)-caffeyl aldehyde + NADPH + H(+). The protein operates within aromatic compound metabolism; phenylpropanoid biosynthesis. Its function is as follows. Involved in lignin biosynthesis. Catalyzes the final step specific for the production of lignin monomers. Catalyzes the NADPH-dependent reduction of coniferaldehyde, 5-hydroxyconiferaldehyde, sinapaldehyde, 4-coumaraldehyde and caffeyl aldehyde to their respective alcohols. This chain is Probable cinnamyl alcohol dehydrogenase 9, found in Oryza sativa subsp. japonica (Rice).